We begin with the raw amino-acid sequence, 185 residues long: Large ribosomal subunit protein uL5m (185 aa).

This sequence belongs to the universal ribosomal protein uL5 family. As to quaternary structure, component of the mitochondrial ribosome large subunit.

It localises to the mitochondrion. This Arabidopsis thaliana (Mouse-ear cress) protein is Large ribosomal subunit protein uL5m (RPL5).